Consider the following 445-residue polypeptide: Phosphoglucosamine mutase (445 aa).

The active-site Phosphoserine intermediate is Ser-102. Positions 102, 241, 243, and 245 each coordinate Mg(2+). Residue Ser-102 is modified to Phosphoserine.

It belongs to the phosphohexose mutase family. Mg(2+) serves as cofactor. Activated by phosphorylation.

It carries out the reaction alpha-D-glucosamine 1-phosphate = D-glucosamine 6-phosphate. Catalyzes the conversion of glucosamine-6-phosphate to glucosamine-1-phosphate. This Escherichia fergusonii (strain ATCC 35469 / DSM 13698 / CCUG 18766 / IAM 14443 / JCM 21226 / LMG 7866 / NBRC 102419 / NCTC 12128 / CDC 0568-73) protein is Phosphoglucosamine mutase.